Here is a 508-residue protein sequence, read N- to C-terminus: Potassium/proton antiporter CemA (508 aa).

Helical transmembrane passes span 66-86 (LFII…LNLL), 282-302 (YQAL…WIIS), 386-406 (ILHL…FILG), 433-453 (ILLL…EVVI), and 468-488 (IISC…KYWI).

It belongs to the CemA family.

It localises to the plastid. It is found in the chloroplast inner membrane. It carries out the reaction K(+)(in) + H(+)(out) = K(+)(out) + H(+)(in). Functionally, contributes to K(+)/H(+) antiport activity by supporting proton efflux to control proton extrusion and homeostasis in chloroplasts in a light-dependent manner to modulate photosynthesis. Prevents excessive induction of non-photochemical quenching (NPQ) under continuous-light conditions. Indirectly promotes efficient inorganic carbon uptake into chloroplasts. The sequence is that of Potassium/proton antiporter CemA from Anthoceros angustus (Hornwort).